The sequence spans 307 residues: 4-diphosphocytidyl-2-C-methyl-D-erythritol kinase (307 aa).

Residue Lys-9 is part of the active site. 94-104 lines the ATP pocket; the sequence is PIGAGLAGGSS. Asp-136 is an active-site residue.

It belongs to the GHMP kinase family. IspE subfamily.

It carries out the reaction 4-CDP-2-C-methyl-D-erythritol + ATP = 4-CDP-2-C-methyl-D-erythritol 2-phosphate + ADP + H(+). It functions in the pathway isoprenoid biosynthesis; isopentenyl diphosphate biosynthesis via DXP pathway; isopentenyl diphosphate from 1-deoxy-D-xylulose 5-phosphate: step 3/6. Its function is as follows. Catalyzes the phosphorylation of the position 2 hydroxy group of 4-diphosphocytidyl-2C-methyl-D-erythritol. This is 4-diphosphocytidyl-2-C-methyl-D-erythritol kinase from Synechococcus sp. (strain CC9902).